The following is a 161-amino-acid chain: MQDAITSVINAADVQGKYLDDSSVEKLRGYFQTGELRVRAAATIAANAATIIKESVAKSLLYSDITRPGGNMYTTRRYAACIRDLDYYLRYATYGMLAGDPSILEERVLNGLKETYNSLGVPIGATIQAILAMKEVTISLVGPDAGKEMGLYFDYICSGLS.

Position 71 is an N4-methylasparagine (asparagine 71). Cysteine 81 provides a ligand contact to (2R,3E)-phycocyanobilin.

This sequence belongs to the phycobiliprotein family. As to quaternary structure, heterodimer of an alpha and a beta chain. Post-translationally, contains one covalently linked phycocyanobilin chromophore.

Its subcellular location is the plastid. The protein resides in the chloroplast thylakoid membrane. Functionally, light-harvesting photosynthetic bile pigment-protein from the phycobiliprotein complex. Allophycocyanin has a maximum absorption at approximately 650 nanometers. The sequence is that of Allophycocyanin beta chain (apcB) from Porphyra purpurea (Red seaweed).